Reading from the N-terminus, the 3033-residue chain is Genome polyprotein (3033 aa).

Serine 2 is modified (N-acetylserine; by host). The tract at residues 2 to 23 (STNPKPQRKTKRNTNRRPQDVK) is interaction with STAT1. The interaction with EIF2AK2/PKR stretch occupies residues 2–58 (STNPKPQRKTKRNTNRRPQDVKFPGGGQIVGGVYLLPRRGPRLGVRATRKTSERSQP). The segment at 2 to 59 (STNPKPQRKTKRNTNRRPQDVKFPGGGQIVGGVYLLPRRGPRLGVRATRKTSERSQPR) is interaction with DDX3X. A disordered region spans residues 2–75 (STNPKPQRKT…PKDRRSTGKS (74 aa)). Over 2–168 (STNPKPQRKT…EDGVNFATGN (167 aa)) the chain is Cytoplasmic. 2 short sequence motifs (nuclear localization signal) span residues 5–13 (PKPQRKTKR) and 38–43 (PRRGPR). Residues 7–16 (PQRKTKRNTN) show a composition bias toward basic residues. Over residues 32-47 (GGVYLLPRRGPRLGVR) the composition is skewed to low complexity. Serine 53 carries the post-translational modification Phosphoserine; by host. 2 consecutive short sequence motifs (nuclear localization signal) follow at residues 58-64 (PRGRRQP) and 66-71 (PKDRRS). Position 99 is a phosphoserine; by host (serine 99). The important for endoplasmic reticulum and mitochondrial localization stretch occupies residues 112–152 (PRHRSRNVGKVIDTLTCGFADLMGYIPVVGAPLGGVARALA). Phosphoserine; by host PKA is present on serine 116. The interaction with APOA2 stretch occupies residues 122-173 (VIDTLTCGFADLMGYIPVVGAPLGGVARALAHGVRVLEDGVNFATGNLPGCS). The tract at residues 164 to 167 (FATG) is important for lipid droplets localization. The chain crosses the membrane as a helical span at residues 169 to 189 (LPGCSFSIFLLALLSCITTPV). Residues 178-191 (LLALLSCITTPVSA) constitute a propeptide, ER anchor for the core protein, removed in mature form by host signal peptidase. Residues 190 to 358 (SAAEVKNIST…GGAHWGVMFG (169 aa)) are Lumenal-facing. N-linked (GlcNAc...) asparagine; by host glycans are attached at residues asparagine 196, asparagine 209, and asparagine 234. The interval 265–296 (VVMSATLCSALYVGDLCGGVMLAAQMFIVSPQ) is important for fusion. Asparagine 305 carries an N-linked (GlcNAc...) asparagine; by host glycan. A helical membrane pass occupies residues 359–379 (LAYFSMQGAWAKVVVILLLAA). At 380-729 (GVDAQTHTVG…WEWVVLLFLL (350 aa)) the chain is on the lumenal side. The segment at 385-411 (THTVGGSTAHNARTLTGMFSLGARQKI) is HVR1. N-linked (GlcNAc...) (high mannose) asparagine; by host glycosylation is found at asparagine 417, asparagine 423, asparagine 430, and asparagine 448. Disulfide bonds link cysteine 429–cysteine 554, cysteine 452–cysteine 459, cysteine 488–cysteine 496, and cysteine 505–cysteine 510. N-linked (GlcNAc...) (high mannose) asparagine; by host glycosylation occurs at asparagine 477. Residues 484-496 (MRPYCWHYPPRQC) form a CD81-binding 1 region. A CD81-binding 2 region spans residues 524–555 (LGAPTYTWGENETDVFLLNSTRPPQGSWFGCT). Residues asparagine 534, asparagine 542, and asparagine 558 are each glycosylated (N-linked (GlcNAc...) (high mannose) asparagine; by host). Cysteine 566 and cysteine 571 are oxidised to a cystine. A glycan (N-linked (GlcNAc...) (high mannose) asparagine; by host) is linked at asparagine 578. Intrachain disulfides connect cysteine 585–cysteine 589, cysteine 601–cysteine 624, and cysteine 611–cysteine 648. N-linked (GlcNAc...) (high mannose) asparagine; by host glycans are attached at residues asparagine 627 and asparagine 649. Residues cysteine 656 and cysteine 681 are joined by a disulfide bond. An EIF2AK2/eIF2-alpha phosphorylation homology domain (PePHD) region spans residues 664–675 (SQLSPLLHSTTE). The chain crosses the membrane as a helical span at residues 730–750 (LADARVCACLWMLILLGQAEA). Over 751 to 761 (ALEKLVVLHAA) the chain is Lumenal. A helical membrane pass occupies residues 762–782 (SAASCNGFLYFVIFFVAAWYI). Over 783-786 (KGRV) the chain is Cytoplasmic. Residues 787–807 (VPLATYSLTGLWSFGLLLLAL) form a helical membrane-spanning segment. Residues 808–817 (PQQAYAYDAS) are Lumenal-facing. A helical membrane pass occupies residues 818-838 (VHGQIGAALLVLITLFTLTPG). Residues 839–885 (YKTLLSRFLWWLCYLLTLAEAMVQEWAPPMQVRGGRDGIIWAVAIFC) are Cytoplasmic-facing. Residues 886 to 906 (PGVVFDITKWLLAVLGPAYLL) traverse the membrane as a helical segment. Over 907–932 (KGALTRVPYFVRAHALLRMCTMVRHL) the chain is Lumenal. Residues 907–1030 (KGALTRVPYF…GYTSKGWSLL (124 aa)) enclose the Peptidase C18 domain. Positions 908–1210 (GALTRVPYFV…PVETLDIVTR (303 aa)) are protease NS2-3. Cysteine 926 is lipidated: S-palmitoyl cysteine; by host. Residues 933-953 (AGGRYVQMVLLALGRWTGTYI) traverse the membrane as a helical segment. The interaction with host SCPS1 stretch occupies residues 933-953 (AGGRYVQMVLLALGRWTGTYI). Over 954–1661 (YDHLTPMSDW…CMQADLEVMT (708 aa)) the chain is Cytoplasmic. Active-site for protease NS2 activity; shared with dimeric partner residues include histidine 956, glutamate 976, and cysteine 997. The 182-residue stretch at 1031–1212 (APITAYAQQT…ETLDIVTRSP (182 aa)) folds into the Peptidase S29 domain. Residues histidine 1087 and aspartate 1111 each act as charge relay system; for serine protease NS3 activity in the active site. 2 residues coordinate Zn(2+): cysteine 1127 and cysteine 1129. Serine 1169 functions as the Charge relay system; for serine protease NS3 activity in the catalytic mechanism. Residues cysteine 1175 and histidine 1179 each coordinate Zn(2+). The 153-residue stretch at 1221–1373 (PAVPQTYQVG…PNIEEVALGQ (153 aa)) folds into the Helicase ATP-binding domain. 1234–1241 (APTGSGKS) serves as a coordination point for ATP. Mg(2+) contacts are provided by serine 1241 and glutamate 1321. A DECH box motif is present at residues 1320–1323 (DECH). An RNA-binding region spans residues 1490-1501 (QRRGRTGRGRLG). A helical membrane pass occupies residues 1662 to 1682 (STWVLAGGVLAAVAAYCLATG). The NS3-binding stretch occupies residues 1683 to 1694 (CVCIIGRLHVNQ). Topologically, residues 1683–1809 (CVCIIGRLHV…ALTSPLSTST (127 aa)) are cytoplasmic. A helical membrane pass occupies residues 1810-1830 (TILLNILGGWLASQIAPPAGA). The Lumenal segment spans residues 1831–1832 (TG). Residues 1833-1853 (FVVSGLVGAAVGSIGLGKVLV) traverse the membrane as a helical segment. Positions 1837–1865 (GLVGAAVGSIGLGKVLVDILAGYGAGISG) are glycine zipper. Position 1854 (aspartate 1854) is a topological domain, cytoplasmic. The helical transmembrane segment at 1855–1875 (ILAGYGAGISGALVAFKIMSG) threads the bilayer. Topologically, residues 1876–1885 (EKPSMEDVVN) are lumenal. The chain crosses the membrane as a helical span at residues 1886 to 1906 (LLPGILSPGALVVGVICAAIL). Residues 1907-1976 (RRHVGPGEGA…WITEDCPIPC (70 aa)) are Cytoplasmic-facing. Cysteine 1972 carries S-palmitoyl cysteine; by host lipidation. Cysteine 1976 carries S-palmitoyl cysteine; by host; partial lipidation. The stretch at 1977-2007 (SGSWLRDVWDWVCTILTDFKNWLTSKLFPKM) is an intramembrane region. The membrane-binding stretch occupies residues 1982–2002 (RDVWDWVCTILTDFKNWLTSK). At 2008 to 3012 (PGLPFISCQK…YHSVSRARPR (1005 aa)) the chain is on the cytoplasmic side. Positions 2009-2225 (GLPFISCQKG…RATCTTHGKA (217 aa)) are RNA-binding. Residues cysteine 2015, cysteine 2033, cysteine 2035, and cysteine 2056 each contribute to the Zn(2+) site. The residue at position 2069 (tyrosine 2069) is a Phosphotyrosine; by host. Residues 2124-2212 (EFFSWVDGVQ…ASSSASQLSA (89 aa)) are FKBP8-binding. The segment at 2124–2332 (EFFSWVDGVQ…PTPPPRRRRT (209 aa)) is transcriptional activation. The segment at 2139 to 2143 (PIPKP) is interaction with non-structural protein 4A. Disordered stretches follow at residues 2193–2214 (RLAR…SAPS) and 2309–2335 (ATVA…TVGL). Serine 2198 is subject to Phosphoserine; by host; in p56. Low complexity predominate over residues 2198–2214 (SPPSEASSSASQLSAPS). Serine 2201 is subject to Phosphoserine; by host; in p58. Serine 2205 is modified (phosphoserine; by host; in p56 and p58, regulates intracellular NS5A distribution). Phosphoserine; by host; in p58 occurs at positions 2208, 2211, and 2214. Positions 2210-2249 (LSAPSLRATCTTHGKAYDVDMVDANLFMGGDVTRIESESK) are ISDR. An interaction with EIF2AK2/PKR region spans residues 2214–2275 (SLRATCTTHG…LEPSIPSEYM (62 aa)). Positions 2253-2310 (LDSLDPMVEERSDLEPSIPSEYMLPKKRFPPALPAWARPDYNPPLVESWKRPDYQPAT) are NS4B-binding. Pro residues predominate over residues 2316–2326 (LPPPKKTPTPP). Residues 2322–2325 (TPTP) carry the SH3-binding motif. Threonine 2324 carries the post-translational modification Phosphothreonine; by host. A Nuclear localization signal motif is present at residues 2326–2334 (PPRRRRTVG). The segment at 2336–2447 (SESSIADALQ…SVVCCSMSYS (112 aa)) is interaction with host IFI27. A Glycyl lysine isopeptide (Lys-Gly) (interchain with G-Cter in ubiquitin) cross-link involves residue lysine 2350. The segment at 2351–2431 (SFGQPPPSGD…PGSGSGSWST (81 aa)) is disordered. Residues 2358–2381 (SGDSGLSTGADAADSGSRTPPDEL) are V3. A compositionally biased stretch (acidic residues) spans 2398–2408 (EPGDPDLEPEQ). Residues 2417 to 2431 (GGVVTPGSGSGSWST) are compositionally biased toward low complexity. One can recognise a RdRp catalytic domain in the interval 2656–2774 (PMGFSYDTRC…ISESQGTEED (119 aa)). The Mg(2+) site is built by aspartate 2662, aspartate 2760, and aspartate 2761. The helical transmembrane segment at 3013 to 3033 (LLLLGLLLLFVGVGLFLLPAR) threads the bilayer.

Belongs to the hepacivirus polyprotein family. As to quaternary structure, homooligomer. Interacts with E1 (via C-terminus). Interacts with the non-structural protein 5A. Interacts (via N-terminus) with host STAT1 (via SH2 domain); this interaction results in decreased STAT1 phosphorylation and ubiquitin-mediated proteasome-dependent STAT1 degradation, leading to decreased IFN-stimulated gene transcription. Interacts with host STAT3; this interaction constitutively activates STAT3. Interacts with host LTBR receptor. Interacts with host TNFRSF1A receptor and possibly induces apoptosis. Interacts with host HNRPK. Interacts with host YWHAE. Interacts with host UBE3A/E6AP. Interacts with host DDX3X. Interacts with host APOA2. Interacts with host RXRA protein. Interacts with host SP110 isoform 3/Sp110b; this interaction sequesters the transcriptional corepressor SP110 away from the nucleus. Interacts with host CREB3 nuclear transcription protein; this interaction triggers cell transformation. Interacts with host ACY3. Interacts with host C1QR1. Interacts with host RBM24; this interaction, which enhances the interaction of the mature core protein with 5'-UTR, may inhibit viral translation and favor replication. Interacts with host EIF2AK2/PKR; this interaction induces the autophosphorylation of EIF2AK2. Part of the viral assembly initiation complex composed of NS2, E1, E2, NS3, NS4A, NS5A and the mature core protein. In terms of assembly, forms a heterodimer with envelope glycoprotein E2. Interacts with mature core protein. Interacts with protease NS2. The heterodimer E1/E2 interacts with host CLDN1; this interaction plays a role in viral entry into host cell. Interacts with host SPSB2 (via C-terminus). Part of the viral assembly initiation complex composed of NS2, E1, E2, NS3, NS4A, NS5A and the mature core protein. Interacts with host NEURL3; this interaction prevents E1 binding to glycoprotein E2. Forms a heterodimer with envelope glycoprotein E1. Interacts with host CD81 and SCARB1 receptors; this interaction may play a role in viral entry into host cell. Interacts with host EIF2AK2/PKR; this interaction inhibits EIF2AK2 and probably allows the virus to evade the innate immune response. Interacts with host CD209/DC-SIGN and CLEC4M/DC-SIGNR. Interact with host SPCS1; this interaction is essential for viral particle assembly. Interacts with protease NS2. The heterodimer E1/E2 interacts with host CLDN1; this interaction plays a role in viral entry into host cell. Part of the viral assembly initiation complex composed of NS2, E1, E2, NS3, NS4A, NS5A and the mature core protein. Interacts with host SLC3A2/4F2hc; the interaction may facilitate viral entry into host cell. Interacts with human PLSCR1. As to quaternary structure, homohexamer. Homoheptamer. Interacts with protease NS2. In terms of assembly, homodimer. Interacts with host SPCS1; this interaction is essential for viral particle assembly. Interacts with envelope glycoprotein E1. Interacts with envelope glycoprotein E2. Interacts with viroporin p7. Interacts with serine protease/helicase NS3. Part of the replication complex composed of NS2, NS3, NS4A, NS4B, NS5A and the RNA-directed RNA polymerase embedded in an ER-derived membranous web. Part of the viral assembly initiation complex composed of NS2, E1, E2, NS3, NS4A, NS5A and the mature core protein. Interacts with protease NS2. Interacts with non-structural protein 4A; this interaction stabilizes the folding of NS3 serine protease. NS3-NS4A interaction is essential for NS3 activation and allows membrane anchorage of the latter. NS3/NS4A complex also prevents phosphorylation of host IRF3, thus preventing the establishment of dsRNA induced antiviral state. Interacts with host MAVS; this interaction leads to the cleavage and inhibition of host MAVS. Interacts with host TICAM1; this interaction leads to the cleavage and inhibition of host TICAM1. Interacts with host TANK-binding kinase/TBK1; this interaction results in the inhibition of the association between TBK1 and IRF3, which leads to the inhibition of IRF3 activation. Interacts with host RBM24. Part of the replication complex composed of NS2, NS3, NS4A, NS4B, NS5A and the RNA-directed RNA polymerase embedded in an ER-derived membranous web. Part of the viral assembly initiation complex composed of NS2, E1, E2, NS3, NS4A, NS5A and the mature core protein. As to quaternary structure, interacts with NS3 serine protease; this interaction stabilizes the folding of NS3 serine protease. NS3-NS4A interaction is essential for NS3 activation and allows membrane anchorage of the latter. Interacts with non-structural protein 5A (via N-terminus). Part of the replication complex composed of NS2, NS3, NS4A, NS4B, NS5A and the RNA-directed RNA polymerase embedded in an ER-derived membranous web. Part of the viral assembly initiation complex composed of NS2, E1, E2, NS3, NS4A, NS5A and the mature core protein. In terms of assembly, homomultimer. Interacts with non-structural protein NS5A. Interacts with host PLA2G4C; this interaction likely initiates the recruitment of replication complexes to lipid droplets. Interacts with host STING; this interaction disrupts the interaction between STING and TBK1 thereby suppressing the interferon signaling. Part of the replication complex composed of NS2, NS3, NS4A, NS4B, NS5A and the RNA-directed RNA polymerase embedded in an ER-derived membranous web. Monomer. Homodimer; dimerization is required for RNA-binding. Interacts with the mature core protein. Interacts (via N-terminus) with non-structural protein 4A. Interacts with non-structural protein 4B. Interacts (via region D2) with RNA-directed RNA polymerase. Part of the viral assembly initiation complex composed of NS2, E1, E2, NS3, NS4A, NS5A and the mature core protein. Part of the replication complex composed of NS2, NS3, NS4A, NS4B, NS5A and the RNA-directed RNA polymerase embedded in an ER-derived membranous web. Interacts with host GRB2. Interacts with host BIN1. Interacts with host PIK3R1. Interacts with host SRCAP. Interacts with host FKBP8. Interacts (via C-terminus) with host VAPB (via MSP domain). Interacts with host EIF2AK2/PKR; this interaction leads to disruption of EIF2AK2 dimerization by NS5A and probably allows the virus to evade the innate immune response. Interacts (via N-terminus) with host PACSIN2 (via N-terminus); this interaction attenuates protein kinase C alpha-mediated phosphorylation of PACSIN2 by disrupting the interaction between PACSIN2 and PRKCA. Interacts (via N-terminus) with host SRC kinase (via SH2 domain). Interacts with most Src-family kinases. Interacts with host IFI27 and SKP2; promotes the ubiquitin-mediated proteasomal degradation of NS5A. Interacts with host GPS2. Interacts with host TNFRSF21; this interaction allows the modulation by the virus of JNK, p38 MAPK, STAT3, and Akt signaling pathways in a DR6-dependent manner. Interacts (via N-terminus) with host CIDEB (via N-terminus); this interaction seems to regulate the association of HCV particles with APOE. Interacts with host CHKA/Choline Kinase-alpha; CHKA bridges host PI4KA and NS5A and potentiates NS5A-stimulated PI4KA activity, which then facilitates the targeting of the ternary complex to the ER for viral replication. Interacts with host SPSB2 (via C-terminus); this interaction targets NS5A for ubiquitination and degradation. Interacts with host RAB18; this interaction may promote the association of NS5A and other replicase components with lipid droplets. Interacts (via region D2) with host PPIA/CYPA; the interaction stimulates RNA-binding ability of NS5A and is dependent on the peptidyl-prolyl cis-trans isomerase activity of PPIA/CYPA. Interacts with host TRIM14; this interaction induces the degradation of NS5A. As to quaternary structure, homooligomer. Interacts with non-structural protein 5A. Interacts with host VAPB. Interacts with host PRK2/PKN2. Interacts with host HNRNPA1 and SEPT6; these interactions facilitate viral replication. Part of the replication complex composed of NS2, NS3, NS4A, NS4B, NS5A and the RNA-directed RNA polymerase. It depends on Zn(2+) as a cofactor. Mg(2+) serves as cofactor. Specific enzymatic cleavages in vivo yield mature proteins. The structural proteins, core, E1, E2 and p7 are produced by proteolytic processing by host signal peptidases. The core protein precursor is synthesized as a 23 kDa, which is retained in the ER membrane through the hydrophobic signal peptide. Cleavage by the signal peptidase releases the 21 kDa mature core protein. The cleavage of the core protein precursor occurs between aminoacids 176 and 188 but the exact cleavage site is not known. Some degraded forms of the core protein appear as well during the course of infection. The other proteins (p7, NS2, NS3, NS4A, NS4B, NS5A and NS5B) are cleaved by the viral proteases. Autoprocessing between NS2 and NS3 is mediated by the NS2 cysteine protease catalytic domain and regulated by the NS3 N-terminal domain. In terms of processing, phosphorylated by host PKC and PKA. Post-translationally, ubiquitinated; mediated by UBE3A and leading to core protein subsequent proteasomal degradation. Highly N-glycosylated. In terms of processing, palmitoylation is required for NS2/3 autoprocessing and E2 recruitment to membranes. Post-translationally, palmitoylated. This modification may play a role in its polymerization or in protein-protein interactions. Phosphorylated on serines in a basal form termed p56. p58 is a hyperphosphorylated form of p56. p56 and p58 coexist in the cell in roughly equivalent amounts. Hyperphosphorylation is dependent on the presence of NS4A. Host CSNK1A1/CKI-alpha or RPS6KB1 kinases may be responsible for NS5A phosphorylation. In terms of processing, tyrosine phosphorylation is essential for the interaction with host SRC. Post-translationally, the N-terminus is phosphorylated by host PRK2/PKN2.

The protein resides in the host endoplasmic reticulum membrane. It is found in the host mitochondrion membrane. Its subcellular location is the virion. It localises to the host cytoplasm. The protein localises to the host nucleus. The protein resides in the host lipid droplet. It is found in the virion membrane. Its subcellular location is the host mitochondrion. It localises to the host cell membrane. The protein localises to the host perinuclear region. It carries out the reaction Hydrolysis of four peptide bonds in the viral precursor polyprotein, commonly with Asp or Glu in the P6 position, Cys or Thr in P1 and Ser or Ala in P1'.. It catalyses the reaction a ribonucleoside 5'-triphosphate + H2O = a ribonucleoside 5'-diphosphate + phosphate + H(+). The catalysed reaction is ATP + H2O = ADP + phosphate + H(+). The enzyme catalyses RNA(n) + a ribonucleoside 5'-triphosphate = RNA(n+1) + diphosphate. With respect to regulation, inhibited by the antiviral drug hexamethylene amiloride. Inhibition by amantadine appears to be genotype-dependent. Also inhibited by long-alkyl-chain iminosugar derivatives. Activity is up-regulated by PRK2/PKN2-mediated phosphorylation. In terms of biological role, packages viral RNA to form a viral nucleocapsid, and promotes virion budding. Participates in the viral particle production as a result of its interaction with the non-structural protein 5A. Binds RNA and may function as a RNA chaperone to induce the RNA structural rearrangements taking place during virus replication. Modulates viral translation initiation by interacting with viral IRES and 40S ribosomal subunit. Affects various cell signaling pathways, host immunity and lipid metabolism. Prevents the establishment of cellular antiviral state by blocking the interferon-alpha/beta (IFN-alpha/beta) and IFN-gamma signaling pathways and by blocking the formation of phosphorylated STAT1 and promoting ubiquitin-mediated proteasome-dependent degradation of STAT1. Activates STAT3 leading to cellular transformation. Regulates the activity of cellular genes, including c-myc and c-fos. May repress the promoter of p53, and sequester CREB3 and SP110 isoform 3/Sp110b in the cytoplasm. Represses cell cycle negative regulating factor CDKN1A, thereby interrupting an important check point of normal cell cycle regulation. Targets transcription factors involved in the regulation of inflammatory responses and in the immune response: suppresses TNF-induced NF-kappa-B activation, and activates AP-1. Binds to dendritic cells (DCs) via C1QR1, resulting in down-regulation of T-lymphocytes proliferation. Alters lipid metabolism by interacting with hepatocellular proteins involved in lipid accumulation and storage. Induces up-regulation of FAS promoter activity, and thereby contributes to the increased triglyceride accumulation in hepatocytes (steatosis). Functionally, forms a heterodimer with envelope glycoprotein E2, which mediates virus attachment to the host cell, virion internalization through clathrin-dependent endocytosis and fusion with host membrane. Fusion with the host cell is most likely mediated by both E1 and E2, through conformational rearrangements of the heterodimer required for fusion rather than a classical class II fusion mechanism. E1/E2 heterodimer binds host apolipoproteins such as APOB and APOE thereby forming a lipo-viro-particle (LVP). APOE associated to the LVP allows the initial virus attachment to cell surface receptors such as the heparan sulfate proteoglycans (HSPGs), syndecan-1 (SDC1), syndecan-1 (SDC2), the low-density lipoprotein receptor (LDLR) and scavenger receptor class B type I (SCARB1). The cholesterol transfer activity of SCARB1 allows E2 exposure and binding of E2 to SCARB1 and the tetraspanin CD81. E1/E2 heterodimer binding on CD81 activates the epithelial growth factor receptor (EGFR) signaling pathway. Diffusion of the complex E1-E2-EGFR-SCARB1-CD81 to the cell lateral membrane allows further interaction with Claudin 1 (CLDN1) and occludin (OCLN) to finally trigger HCV entry. Its function is as follows. Forms a heterodimer with envelope glycoprotein E1, which mediates virus attachment to the host cell, virion internalization through clathrin-dependent endocytosis and fusion with host membrane. Fusion with the host cell is most likely mediated by both E1 and E2, through conformational rearrangements of the heterodimer required for fusion rather than a classical class II fusion mechanism. The interaction between envelope glycoprotein E2 and host apolipoprotein E/APOE allows the proper assembly, maturation and infectivity of the viral particles. This interaction is probably promoted via the up-regulation of cellular autophagy by the virus. E1/E2 heterodimer binds host apolipoproteins such as APOB and APOE thereby forming a lipo-viro-particle (LVP). APOE associated to the LVP allows the initial virus attachment to cell surface receptors such as the heparan sulfate proteoglycans (HSPGs), syndecan-1 (SDC1), syndecan-1 (SDC2), the low-density lipoprotein receptor (LDLR) and scavenger receptor class B type I (SCARB1). The cholesterol transfer activity of SCARB1 allows E2 exposure and binding of E2 to SCARB1 and the tetraspanin CD81. E1/E2 heterodimer binding on CD81 activates the epithelial growth factor receptor (EGFR) signaling pathway. Diffusion of the complex E1-E2-EGFR-SCARB1-CD81 to the cell lateral membrane allows further interaction with Claudin 1 (CLDN1) and occludin (OCLN) to finally trigger HCV entry. Inhibits host EIF2AK2/PKR activation, preventing the establishment of an antiviral state. Viral ligand for CD209/DC-SIGN and CLEC4M/DC-SIGNR, which are respectively found on dendritic cells (DCs), and on liver sinusoidal endothelial cells and macrophage-like cells of lymph node sinuses. These interactions allow the capture of circulating HCV particles by these cells and subsequent facilitated transmission to permissive cells such as hepatocytes and lymphocyte subpopulations. The interaction between E2 and host amino acid transporter complex formed by SLC3A2 and SLC7A5/LAT1 may facilitate viral entry into host cell. Ion channel protein that acts as a viroporin and plays an essential role in the assembly, envelopment and secretion of viral particles. Regulates the host cell secretory pathway, which induces the intracellular retention of viral glycoproteins and favors assembly of viral particles. Creates a pore in acidic organelles and releases Ca(2+) and H(+) in the cytoplasm of infected cells, leading to a productive viral infection. High levels of cytoplasmic Ca(2+) may trigger membrane trafficking and transport of viral ER-associated proteins to viroplasms, sites of viral genome replication. This ionic imbalance induces the assembly of the inflammasome complex, which triggers the maturation of pro-IL-1beta into IL-1beta through the action of caspase-1. Targets also host mitochondria and induces mitochondrial depolarization. In addition of its role as a viroporin, acts as a lipid raft adhesion factor. In terms of biological role, cysteine protease required for the proteolytic auto-cleavage between the non-structural proteins NS2 and NS3. The N-terminus of NS3 is required for the function of NS2 protease (active region NS2-3). Promotes the initiation of viral particle assembly by mediating the interaction between structural and non-structural proteins. Functionally, displays three enzymatic activities: serine protease with a chymotrypsin-like fold, NTPase and RNA helicase. NS3 serine protease, in association with NS4A, is responsible for the cleavages of NS3-NS4A, NS4A-NS4B, NS4B-NS5A and NS5A-NS5B. The NS3/NS4A complex prevents phosphorylation of host IRF3, thus preventing the establishment of dsRNA induced antiviral state. The NS3/NS4A complex induces host amino acid transporter component SLC3A2, thus contributing to HCV propagation. NS3 RNA helicase binds to RNA and unwinds both dsDNA and dsRNA in the 3' to 5' direction, and likely resolves RNA complicated stable secondary structures in the template strand. Binds a single ATP and catalyzes the unzipping of a single base pair of dsRNA. Inhibits host antiviral proteins TBK1 and IRF3 thereby preventing the establishment of an antiviral state. Cleaves host MAVS/CARDIF thereby preventing the establishment of an antiviral state. Cleaves host TICAM1/TRIF, thereby disrupting TLR3 signaling and preventing the establishment of an antiviral state. Its function is as follows. Induces a specific membrane alteration that serves as a scaffold for the virus replication complex. This membrane alteration gives rise to the so-called ER-derived membranous web that contains the replication complex. NS4B self-interaction contributes to its function in membranous web formation. Promotes host TRIF protein degradation in a CASP8-dependent manner thereby inhibiting host TLR3-mediated interferon signaling. Disrupts the interaction between STING and TBK1 contributing to the inhibition of interferon signaling. Phosphorylated protein that is indispensable for viral replication and assembly. Both hypo- and hyperphosphorylated states are required for the viral life cycle. The hyperphosphorylated form of NS5A is an inhibitor of viral replication. Involved in RNA-binding and especially in binding to the viral genome. Zinc is essential for RNA-binding. Participates in the viral particle production as a result of its interaction with the mature viral core protein. Its interaction with host VAPB may target the viral replication complex to vesicles. Down-regulates viral IRES translation initiation. Mediates interferon resistance, presumably by interacting with and inhibiting host EIF2AK2/PKR. Prevents BIN1-induced apoptosis. Acts as a transcriptional activator of some host genes important for viral replication when localized in the nucleus. Via the interaction with host PACSIN2, modulates lipid droplet formation in order to promote virion assembly. Modulates TNFRSF21/DR6 signaling pathway for viral propagation. In terms of biological role, RNA-dependent RNA polymerase that performs primer-template recognition and RNA synthesis during viral replication. Initiates RNA transcription/replication at a flavin adenine dinucleotide (FAD), resulting in a 5'- FAD cap on viral RNAs. In this way, recognition of viral 5' RNA by host pattern recognition receptors can be bypassed, thereby evading activation of antiviral pathways. This Homo sapiens (Human) protein is Genome polyprotein.